Reading from the N-terminus, the 328-residue chain is 2,4-dinitroanisole O-demethylase subunit alpha (328 aa).

The propeptide occupies 1 to 9 (MSVTSQTSS). The Zn(2+) site is built by histidine 101, histidine 103, aspartate 105, histidine 168, histidine 225, and cysteine 247.

This sequence belongs to the metallo-beta-lactamase superfamily. Part of the complex DnhAB composed of the 2,4-dinitroanisole O-demethylase alpha (DnhA) and beta (DnhB) subunits. The cofactor is Zn(2+).

The enzyme catalyses 2,4-dinitroanisole + H2O = 2,4-dinitrophenol + methanol + H(+). Its function is as follows. Involved in the degradation of 2,4-dinitroanisole (DNAN), an insensitive munition ingredient used in explosive formulations as a replacement for 2,4,6-trinitrotoluene (TNT). Catalyzes the removal of the methyl group from 2,4-dinitroanisole (DNAN) to yield 2,4-dinitrophenol (2,4-DNP) and methanol. The protein is 2,4-dinitroanisole O-demethylase subunit alpha of Nocardioides sp. (strain JS1661).